Consider the following 232-residue polypeptide: Ribonuclease 3 (232 aa).

The RNase III domain maps to 10 to 135; sequence ALKIYEATGY…LIGAMYMDGG (126 aa). Glutamate 48 serves as a coordination point for Mg(2+). The active site involves aspartate 52. Mg(2+)-binding residues include asparagine 121 and glutamate 124. Residue glutamate 124 is part of the active site. The region spanning 161-230 is the DRBM domain; the sequence is DPKTALQEWV…AKLMLKKITE (70 aa).

The protein belongs to the ribonuclease III family. Homodimer. Mg(2+) serves as cofactor.

The protein resides in the cytoplasm. The catalysed reaction is Endonucleolytic cleavage to 5'-phosphomonoester.. Functionally, digests double-stranded RNA. Involved in the processing of primary rRNA transcript to yield the immediate precursors to the large and small rRNAs (23S and 16S). Processes some mRNAs, and tRNAs when they are encoded in the rRNA operon. Processes pre-crRNA and tracrRNA of type II CRISPR loci if present in the organism. The chain is Ribonuclease 3 from Anaplasma marginale (strain Florida).